The chain runs to 656 residues: MKREAFSPSASSTGAGTPLIELAGITRSFRNGEIETRVLHGIDLTIYPGEFVAIVGASGSGKSTLMNILGCLDRPSSGTYRFMGEDVAGFDRDELARLRREAFGFVFQSYNLLGGASARENVEVPAVYSGMPPAERHARAEQLLASLGLGERSHHRPSQLSGGQQQRVSIARALMNGGRIILADEPTGALDSRSGEEVMKLLRQLSAEGHTIILITHAREVAEMAQRIIEIRDGHIVADPGPSKPQGPEPDFAPHVDRTSSMSDLVEATRTALRALRANLFRSALTLLGIVIGVASVIAMLAIGDGAKAKVVDQISAMGTNLLTVRPGAPNQRGRETTATLVIEDVRAIAELPNVLASVPEQSASVTLRADNTDQRTTANATSWNYGVARNWPVASGTFFSAEDEARYATVAVLGQTTAGALFPGVDPIGQYVLVNNIPFQVIGVMSPKGATPWGQDQDDIVFVPFTTGSLRVTGQRYLRNVTVAVEDVSRIDATQNEVSQLLLARHGVEDFQIRNMASVIDTVSATQNTLTILLGTVAAISLLVGGIGVMNIMLVSVTERTREIGIRMATGARMKNILQQFLIEALVVSALGGLIGVAVGLGTAAVIALFDTPIKYSLLPVVLAFGCAFATGLVFGYLPARKAARLDPVVALASE.

The ABC transporter domain occupies 20–258; sequence IELAGITRSF…EPDFAPHVDR (239 aa). 56 to 63 serves as a coordination point for ATP; the sequence is GASGSGKS. 4 helical membrane passes run 284–304, 531–551, 591–611, and 619–639; these read ALTL…LAIG, LTIL…IGVM, ALGG…IALF, and LLPV…FGYL.

This sequence belongs to the ABC transporter superfamily. Macrolide exporter (TC 3.A.1.122) family. Homodimer.

The protein localises to the cell inner membrane. Non-canonical ABC transporter that contains transmembrane domains (TMD), which form a pore in the inner membrane, and an ATP-binding domain (NBD), which is responsible for energy generation. Confers resistance against macrolides. This is Macrolide export ATP-binding/permease protein MacB from Azoarcus sp. (strain BH72).